Consider the following 139-residue polypeptide: Arsenate reductase (139 aa).

Active-site nucleophile residues include cysteine 10, cysteine 82, and cysteine 89. Cystine bridges form between cysteine 10-cysteine 82 and cysteine 82-cysteine 89.

The protein belongs to the low molecular weight phosphotyrosine protein phosphatase family. Thioredoxin-coupled ArsC subfamily.

The protein resides in the cytoplasm. It catalyses the reaction arsenate + [thioredoxin]-dithiol + H(+) = arsenite + [thioredoxin]-disulfide + H2O. Functionally, catalyzes the reduction of arsenate [As(V)] to arsenite [As(III)]. This is Arsenate reductase from Oceanobacillus iheyensis (strain DSM 14371 / CIP 107618 / JCM 11309 / KCTC 3954 / HTE831).